The primary structure comprises 1537 residues: Leucine-rich repeat-containing protein 7 (1537 aa).

LRR repeat units follow at residues 23–44 (IISV…VFNF), 47–68 (TLEE…LFNC), 70–91 (ALRK…IASL), 93–114 (NLKE…IKCC), 116–137 (CLTI…FTQL), 139–161 (NLTQ…GRLV), 162–183 (KLRI…MHKL), 185–206 (QLER…LDQI), 208–229 (NLRE…IGKL), 231–253 (MLVY…SGCE), 254–275 (ALED…IGLL), 277–298 (KLTT…IGNL), 300–321 (LLEE…IGYL), 323–344 (SLRT…IGSC), 346–367 (NVTV…IGQM), 369–391 (KLRV…TKLK), and 392–413 (ELAA…QTEA). A phosphoserine mark is found at S439, S441, and S443. Residues 663-676 (KKESTDESEVDKTH) are compositionally biased toward basic and acidic residues. Disordered regions lie at residues 663–709 (KKES…VGSL), 730–759 (FPQP…DRLP), 786–810 (AENA…RRPL), and 824–892 (EQST…SPGV). Polar residues predominate over residues 677–709 (CLNNSVSSGTYSDYSPSQASSGSSNTRVKVGSL). Over residues 790 to 804 (NSNPLLSSKSRSTSS) the composition is skewed to low complexity. The residue at position 831 (T831) is a Phosphothreonine. S850 is subject to Phosphoserine. Residues 859–871 (PSKLETTPTTSPL) are compositionally biased toward low complexity. T865 carries the post-translational modification Phosphothreonine. A Phosphoserine modification is found at S869. The segment covering 872 to 882 (PERKEHIKEST) has biased composition (basic and acidic residues). 3 positions are modified to phosphoserine: S947, S949, and S1118. The disordered stretch occupies residues 1136–1159 (ELPPTDRYGRPPYRGGLDRQSSVT). R1149 is modified (omega-N-methylarginine). S1233 carries the phosphoserine modification. Disordered stretches follow at residues 1234–1265 (DYNL…SCGK) and 1331–1360 (QKTP…YPLG). Positions 1243 to 1263 (KPSDNSDLKTRPTPVKGEESC) are enriched in basic and acidic residues. Over residues 1332–1354 (KTPSQQSNILDNGQEDVSPSGQW) the composition is skewed to polar residues. 2 positions are modified to phosphoserine: S1335 and S1439. Residues 1445-1535 (EQFCVRIEKN…TVDLVIQREL (91 aa)) enclose the PDZ domain.

It belongs to the LAP (LRR and PDZ) protein family. Interacts with CNKSR2 and DLG4. Interacts with CTNND2/Catenin delta-2. Forms a complex with N-cadherin through CTNND2. Interacts with CAMK2A. Brain-specific. Isoform 3 is ubiquitously expressed.

The protein localises to the cytoplasm. The protein resides in the postsynaptic density. Its function is as follows. Required for normal synaptic spine architecture and function. Necessary for DISC1 and GRM5 localization to postsynaptic density complexes and for both N-methyl D-aspartate receptor-dependent and metabotropic glutamate receptor-dependent long term depression. The chain is Leucine-rich repeat-containing protein 7 (LRRC7) from Homo sapiens (Human).